A 153-amino-acid polypeptide reads, in one-letter code: Pheromone-binding protein Gp-9 (153 aa).

Residues 1-19 form the signal peptide; the sequence is MKTFVLHIFIFALVAFASA. 3 disulfide bridges follow: Cys-37/Cys-77, Cys-73/Cys-129, and Cys-118/Cys-138.

The protein belongs to the PBP/GOBP family. Homodimer.

It localises to the secreted. In terms of biological role, colony queen number, a major feature of social organization, is associated with worker genotype for Gp-9. Colonies are headed by either a single reproductive queen (monogyne form) or multiple queens (polygyne form). Differences in worker Gp-9 genotypes between social forms may cause differences in workers' abilities to recognize queens and regulate their numbers. The sequence is that of Pheromone-binding protein Gp-9 from Solenopsis interrupta (Fire ant).